The chain runs to 81 residues: MSSGCLLLLLGLLTLWAELTPVSGRPRLCELPAESGLCNAYIPSFYYNPHSHKCQKFMYGGCGGNANNFKTIVECHRTCVG.

The N-terminal stretch at methionine 1 to glycine 24 is a signal peptide. Residues cysteine 29–cysteine 79 form the BPTI/Kunitz inhibitor domain. 3 cysteine pairs are disulfide-bonded: cysteine 29/cysteine 79, cysteine 38/cysteine 62, and cysteine 54/cysteine 75.

The protein belongs to the venom Kunitz-type family. Expressed by the venom gland.

Its subcellular location is the secreted. Functionally, snake venom serine protease inhibitor. The protein is Protease inhibitor 3 of Walterinnesia aegyptia (Desert black snake).